We begin with the raw amino-acid sequence, 255 residues long: Probable septum site-determining protein MinC (255 aa).

The span at 103-115 shows a compositional bias: basic and acidic residues; the sequence is SHGRRPRGERSEE. The disordered stretch occupies residues 103-136; that stretch reads SHGRRPRGERSEEAAEAVPAAAEPVPAPAASPAP. The segment covering 127 to 136 has biased composition (pro residues); that stretch reads VPAPAASPAP.

The protein belongs to the MinC family. As to quaternary structure, interacts with MinD and FtsZ.

Its function is as follows. Cell division inhibitor that blocks the formation of polar Z ring septums. Rapidly oscillates between the poles of the cell to destabilize FtsZ filaments that have formed before they mature into polar Z rings. Prevents FtsZ polymerization. This is Probable septum site-determining protein MinC from Ralstonia nicotianae (strain ATCC BAA-1114 / GMI1000) (Ralstonia solanacearum).